We begin with the raw amino-acid sequence, 320 residues long: tRNA-cytidine(32) 2-sulfurtransferase (320 aa).

Residues Ser-54–Ser-59 carry the PP-loop motif motif. Cys-129, Cys-132, and Cys-220 together coordinate [4Fe-4S] cluster.

This sequence belongs to the TtcA family. Homodimer. The cofactor is Mg(2+). [4Fe-4S] cluster serves as cofactor.

It is found in the cytoplasm. The enzyme catalyses cytidine(32) in tRNA + S-sulfanyl-L-cysteinyl-[cysteine desulfurase] + AH2 + ATP = 2-thiocytidine(32) in tRNA + L-cysteinyl-[cysteine desulfurase] + A + AMP + diphosphate + H(+). It participates in tRNA modification. Functionally, catalyzes the ATP-dependent 2-thiolation of cytidine in position 32 of tRNA, to form 2-thiocytidine (s(2)C32). The sulfur atoms are provided by the cysteine/cysteine desulfurase (IscS) system. The polypeptide is tRNA-cytidine(32) 2-sulfurtransferase (Bordetella pertussis (strain Tohama I / ATCC BAA-589 / NCTC 13251)).